The following is a 231-amino-acid chain: NKG2-C type II integral membrane protein (231 aa).

A compositionally biased stretch (polar residues) spans 1–12 (MNKQRGTFSEVS). A disordered region spans residues 1-32 (MNKQRGTFSEVSLAQDPKRQQRKPKGNKSSIS). At 1 to 70 (MNKQRGTFSE…CQGLLPPPEK (70 aa)) the chain is on the cytoplasmic side. Residues 71–93 (LTAEVLGIICIVLMATVLKTIVL) form a helical; Signal-anchor for type II membrane protein membrane-spanning segment. Residues 94 to 231 (IPFLEQNNFS…SMIYHCKHKL (138 aa)) are Extracellular-facing. N100 carries an N-linked (GlcNAc...) asparagine glycan. A C-type lectin domain is found at 116–229 (HCPEEWITYS…GSSMIYHCKH (114 aa)). Disulfide bonds link C117–C128, C145–C227, and C206–C219. 2 N-linked (GlcNAc...) asparagine glycosylation sites follow: N149 and N178.

As to quaternary structure, heterodimer with KLRD1; disulfide-linked. KLRD1-KLRC2 receptor complex interacts with TYROBP homodimer; this interaction is necessary for the expression on the cell surface. KLRD1-KLRC2 receptor complex can bind with low affinity to HLA-E loaded with self-peptides derived from the signal sequence of classical MHC class Ia. Expressed in NK cell subsets, in particular in adaptive CD57-positive NK cells (at protein level). Expressed in terminally differentiated cytotoxic gamma-delta T cells (at protein level). Expressed in alpha-beta T cells subsets (at protein level). KLRD1-KLRC1 and KLRD1-KLRC2 are differentially expressed within NK and T cell populations, with only minor subsets expressing both receptor complexes (at protein level).

It is found in the cell membrane. Its function is as follows. Immune activating receptor involved in self-nonself discrimination. In complex with KLRD1 on cytotoxic lymphocyte subsets, recognizes non-classical major histocompatibility (MHC) class Ib HLA-E loaded with signal sequence-derived peptides from non-classical MHC class Ib HLA-G molecules, likely playing a role in the generation and effector functions of adaptive natural killer (NK) cells and in maternal-fetal tolerance during pregnancy. Regulates the effector functions of terminally differentiated cytotoxic lymphocyte subsets, and in particular may play a role in adaptive NK cell response to viral infection. Upon HLA-E-peptide binding, transmits intracellular signals via the adapter protein TYROBP/DAP12, triggering the phosphorylation of proximal signaling molecules and cell activation. This is NKG2-C type II integral membrane protein (KLRC2) from Homo sapiens (Human).